Consider the following 404-residue polypeptide: ORC1-type DNA replication protein 2 (404 aa).

Residues 64–68 (TGKTS), tyrosine 205, and arginine 217 contribute to the ATP site.

It belongs to the CDC6/cdc18 family. Interacts with MCM.

Its function is as follows. Involved in regulation of DNA replication. Stimulates the helicase activity of MCM via stimulation of its ATPase activity. Binding to MCM may result in conformational changes in MCM, leading to catalytic ATP hydrolysis by the helicase. Directly stimulates MCM movement along single-stranded and double-stranded DNA. Does not bind DNA. The protein is ORC1-type DNA replication protein 2 (cdc6-2) of Thermoplasma acidophilum (strain ATCC 25905 / DSM 1728 / JCM 9062 / NBRC 15155 / AMRC-C165).